We begin with the raw amino-acid sequence, 205 residues long: Adenylyl-sulfate kinase (205 aa).

39 to 46 is a binding site for ATP; that stretch reads GLSGAGKS. Ser113 acts as the Phosphoserine intermediate in catalysis.

The protein belongs to the APS kinase family.

The catalysed reaction is adenosine 5'-phosphosulfate + ATP = 3'-phosphoadenylyl sulfate + ADP + H(+). It participates in sulfur metabolism; hydrogen sulfide biosynthesis; sulfite from sulfate: step 2/3. Catalyzes the synthesis of activated sulfate. The sequence is that of Adenylyl-sulfate kinase from Vibrio parahaemolyticus serotype O3:K6 (strain RIMD 2210633).